Here is a 355-residue protein sequence, read N- to C-terminus: Guanine nucleotide-binding protein G(z) subunit alpha (355 aa).

Residues 1-14 show a composition bias toward basic and acidic residues; the sequence is MGCRQSSEEKEAAR. Residues 1–26 form a disordered region; that stretch reads MGCRQSSEEKEAARRSRRIDRHLRSE. A lipid anchor (N-myristoyl glycine) is attached at G2. C3 carries S-palmitoyl cysteine lipidation. Residues 32 to 355 form the G-alpha domain; the sequence is REIKLLLLGT…QNNLKYIGLC (324 aa). The G1 motif stretch occupies residues 35-48; the sequence is KLLLLGTSNSGKST. Residues 40–47, 176–182, 201–205, 270–273, and A327 contribute to the GTP site; these read GTSNSGKS, LRSRDMT, DVGGQ, and NKKD. Mg(2+) is bound by residues S47 and T182. A G2 motif region spans residues 174-182; that stretch reads DILRSRDMT. The tract at residues 197–206 is G3 motif; the sequence is FKMVDVGGQR. The interval 266-273 is G4 motif; the sequence is ILFLNKKD. Positions 325-330 are G5 motif; the sequence is TCATDT.

The protein belongs to the G-alpha family. G(i/o/t/z) subfamily. As to quaternary structure, G-proteins are composed of 3 units; alpha, beta and gamma. The alpha chain contains the guanine nucleotide binding site. Interacts with ADGRB2.

It localises to the membrane. Its function is as follows. Guanine nucleotide-binding proteins (G proteins) are involved as modulators or transducers in various transmembrane signaling systems. In Mus musculus (Mouse), this protein is Guanine nucleotide-binding protein G(z) subunit alpha (Gnaz).